The following is a 316-amino-acid chain: MTQKPTLHPRNRHQGRYDFPSLIKAHPDLARFTITNPHGKPSIDFANPEAVRVFNRALLKAQYGIQHWDIPADYLCPPIPGRADYIHVAADLLAEDNAGEVPKGAQVRALDIGVGANCIYPLLGHCDYRWRFLGSDIDPVALASAKAIVQANGLSKAIALRQQNNAKLILGGLLEEDERFDLTLCNPPFHASREEATRGSQRKWKNLGKQDPKRKLPVLNFGGQNNELWCEGGEIRFVSQLVGESLQYAVQVLWFTSLVSKASNLPGIEAALKKAGVKAVRIVEMGQGQKQSRMVAWSFHDHSQRQAWNERRKSQA.

Belongs to the methyltransferase superfamily. METTL16/RlmF family.

Its subcellular location is the cytoplasm. The enzyme catalyses adenosine(1618) in 23S rRNA + S-adenosyl-L-methionine = N(6)-methyladenosine(1618) in 23S rRNA + S-adenosyl-L-homocysteine + H(+). Specifically methylates the adenine in position 1618 of 23S rRNA. The polypeptide is Ribosomal RNA large subunit methyltransferase F (Pseudomonas putida (strain W619)).